The sequence spans 617 residues: Proline--tRNA ligase (617 aa).

The protein belongs to the class-II aminoacyl-tRNA synthetase family. ProS type 1 subfamily. Homodimer.

It localises to the cytoplasm. It carries out the reaction tRNA(Pro) + L-proline + ATP = L-prolyl-tRNA(Pro) + AMP + diphosphate. In terms of biological role, catalyzes the attachment of proline to tRNA(Pro) in a two-step reaction: proline is first activated by ATP to form Pro-AMP and then transferred to the acceptor end of tRNA(Pro). As ProRS can inadvertently accommodate and process non-cognate amino acids such as alanine and cysteine, to avoid such errors it has two additional distinct editing activities against alanine. One activity is designated as 'pretransfer' editing and involves the tRNA(Pro)-independent hydrolysis of activated Ala-AMP. The other activity is designated 'posttransfer' editing and involves deacylation of mischarged Ala-tRNA(Pro). The misacylated Cys-tRNA(Pro) is not edited by ProRS. The chain is Proline--tRNA ligase from Streptococcus pneumoniae (strain P1031).